Consider the following 207-residue polypeptide: Holliday junction resolvase RecU (207 aa).

Residues 1–21 (MTIRYPNGQVYRQPGPTKSKS) are disordered. Residues Thr87, Asp89, Glu102, and Gln121 each contribute to the Mg(2+) site.

Belongs to the RecU family. Requires Mg(2+) as cofactor.

The protein localises to the cytoplasm. It carries out the reaction Endonucleolytic cleavage at a junction such as a reciprocal single-stranded crossover between two homologous DNA duplexes (Holliday junction).. In terms of biological role, endonuclease that resolves Holliday junction intermediates in genetic recombination. Cleaves mobile four-strand junctions by introducing symmetrical nicks in paired strands. Promotes annealing of linear ssDNA with homologous dsDNA. Required for DNA repair, homologous recombination and chromosome segregation. This Lactiplantibacillus plantarum (strain ATCC BAA-793 / NCIMB 8826 / WCFS1) (Lactobacillus plantarum) protein is Holliday junction resolvase RecU.